The primary structure comprises 161 residues: Regulator of ribonuclease activity A (161 aa).

The protein belongs to the RraA family. As to quaternary structure, homotrimer. Binds to both RNA-binding sites in the C-terminal region of Rne and to RhlB.

It localises to the cytoplasm. In terms of biological role, globally modulates RNA abundance by binding to RNase E (Rne) and regulating its endonucleolytic activity. Can modulate Rne action in a substrate-dependent manner by altering the composition of the degradosome. Modulates RNA-binding and helicase activities of the degradosome. This Escherichia fergusonii (strain ATCC 35469 / DSM 13698 / CCUG 18766 / IAM 14443 / JCM 21226 / LMG 7866 / NBRC 102419 / NCTC 12128 / CDC 0568-73) protein is Regulator of ribonuclease activity A.